The primary structure comprises 499 residues: Probable cytochrome P450 cyp-35D1 (499 aa).

C444 provides a ligand contact to heme.

Belongs to the cytochrome P450 family. The cofactor is heme. In terms of tissue distribution, expressed in hypodermis, intestine and vulva upon thiabendazole (TBZ) exposure.

Cytochromes P450 are a group of heme-thiolate monooxygenases. They oxidize a variety of structurally unrelated compounds, including steroids, fatty acids, and xenobiotics. Involved in the oxidative metabolism of thiabendazole (TBZ). Catalyzes the conversion of TBZ to its hydroxylated form. The protein is Probable cytochrome P450 cyp-35D1 of Caenorhabditis elegans.